The sequence spans 554 residues: (Z)-gamma-bisabolene synthase 1 (554 aa).

Asp-306, Asp-310, Asp-450, and Asp-458 together coordinate Mg(2+). Residues 306–310 (DDACD) carry the DDXXD motif motif.

The protein belongs to the terpene synthase family. Tpsa subfamily. Mg(2+) is required as a cofactor. The cofactor is Mn(2+). Predominantly expressed in roots. Expressed in the cortex and the sub-epidermal layers of roots. Also detected in leaf hydathodes and flower stigmata.

It localises to the cytoplasm. The enzyme catalyses (2E,6E)-farnesyl diphosphate = (Z)-gamma-bisabolene + diphosphate. It participates in secondary metabolite biosynthesis; terpenoid biosynthesis. In terms of biological role, involved in sesquiterpene (C15) biosynthesis. The major product is (Z)-gamma-bisabolene with minor amounts of (E)-nerolidol and alpha-bisabolol. This chain is (Z)-gamma-bisabolene synthase 1 (TPS12), found in Arabidopsis thaliana (Mouse-ear cress).